A 64-amino-acid chain; its full sequence is MKFMLNLYVLGIMLTLLSIFVRVMESLGGLLESPLPGSSWITRGQLANTQPPKGLPDHPSRGVQ.

Positions 1-37 (MKFMLNLYVLGIMLTLLSIFVRVMESLGGLLESPLPG) are required for targeting to lipid droplets. The chain crosses the membrane as a helical span at residues 7–24 (LYVLGIMLTLLSIFVRVM). Polar residues predominate over residues 42–51 (TRGQLANTQP). The interval 42–64 (TRGQLANTQPPKGLPDHPSRGVQ) is disordered. A compositionally biased stretch (basic and acidic residues) spans 55-64 (LPDHPSRGVQ).

Its subcellular location is the lipid droplet. It is found in the secreted. The protein localises to the membrane. Its function is as follows. Increases intracellular lipid accumulation. Stimulates expression of cytokines including IL6, MIF and VEGFA. Enhances cell growth and proliferation. This chain is Hypoxia-inducible lipid droplet-associated protein (Hilpda), found in Mus musculus (Mouse).